A 357-amino-acid chain; its full sequence is Glutamine synthetase cytosolic isozyme (357 aa).

A GS beta-grasp domain is found at 20–100 (VIAEYIWIGG…VICDAYSPNG (81 aa)). The region spanning 107–357 (KRAAAAKIFN…IAETTILWKP (251 aa)) is the GS catalytic domain.

Belongs to the glutamine synthetase family. As to quaternary structure, homooctamer.

The protein localises to the cytoplasm. It carries out the reaction L-glutamate + NH4(+) + ATP = L-glutamine + ADP + phosphate + H(+). The sequence is that of Glutamine synthetase cytosolic isozyme from Pinus sylvestris (Scotch pine).